A 172-amino-acid polypeptide reads, in one-letter code: NADH-ubiquinone oxidoreductase chain 6 (172 aa).

5 helical membrane passes run 1–21 (MTYF…AVAS), 25–45 (PYFA…VLVG), 53–73 (LVLF…AALA), 86–106 (VLGY…IFWG), and 140–160 (GGML…VLEL).

The protein belongs to the complex I subunit 6 family.

It localises to the mitochondrion membrane. The enzyme catalyses a ubiquinone + NADH + 5 H(+)(in) = a ubiquinol + NAD(+) + 4 H(+)(out). Core subunit of the mitochondrial membrane respiratory chain NADH dehydrogenase (Complex I) that is believed to belong to the minimal assembly required for catalysis. Complex I functions in the transfer of electrons from NADH to the respiratory chain. The immediate electron acceptor for the enzyme is believed to be ubiquinone. This Cyprinus carpio (Common carp) protein is NADH-ubiquinone oxidoreductase chain 6 (MT-ND6).